The primary structure comprises 165 residues: Thiol peroxidase (165 aa).

In terms of domain architecture, Thioredoxin spans 18 to 164 (RKVGDKAPNF…YEAAIEAAKK (147 aa)). Catalysis depends on C60, which acts as the Cysteine sulfenic acid (-SOH) intermediate. C60 and C94 are oxidised to a cystine.

This sequence belongs to the peroxiredoxin family. Tpx subfamily. As to quaternary structure, homodimer.

It carries out the reaction a hydroperoxide + [thioredoxin]-dithiol = an alcohol + [thioredoxin]-disulfide + H2O. In terms of biological role, thiol-specific peroxidase that catalyzes the reduction of hydrogen peroxide and organic hydroperoxides to water and alcohols, respectively. Plays a role in cell protection against oxidative stress by detoxifying peroxides. The chain is Thiol peroxidase from Listeria monocytogenes serovar 1/2a (strain ATCC BAA-679 / EGD-e).